A 726-amino-acid chain; its full sequence is Catalase-peroxidase (726 aa).

A disordered region spans residues 1 to 33 (MSTTDDTHNTLSTGKCPFHQGGHDRSAGAGTAS). Residues 105–226 (WHGAGTYRSI…LGATEMGLIY (122 aa)) constitute a cross-link (tryptophyl-tyrosyl-methioninium (Trp-Tyr) (with M-252)). Histidine 106 serves as the catalytic Proton acceptor. A cross-link (tryptophyl-tyrosyl-methioninium (Tyr-Met) (with W-105)) is located at residues 226–252 (YVNPEGPDHSGEPLSAAAAIRATFGNM). Histidine 267 lines the heme b pocket.

This sequence belongs to the peroxidase family. Peroxidase/catalase subfamily. As to quaternary structure, homodimer or homotetramer. Requires heme b as cofactor. Post-translationally, formation of the three residue Trp-Tyr-Met cross-link is important for the catalase, but not the peroxidase activity of the enzyme.

It catalyses the reaction H2O2 + AH2 = A + 2 H2O. The enzyme catalyses 2 H2O2 = O2 + 2 H2O. In terms of biological role, bifunctional enzyme with both catalase and broad-spectrum peroxidase activity. The chain is Catalase-peroxidase from Salmonella typhi.